The chain runs to 312 residues: Acetaldehyde dehydrogenase (312 aa).

S12 to V15 contacts NAD(+). The active-site Acyl-thioester intermediate is C132. NAD(+) is bound by residues S163–N171 and N290.

The protein belongs to the acetaldehyde dehydrogenase family.

The catalysed reaction is acetaldehyde + NAD(+) + CoA = acetyl-CoA + NADH + H(+). The chain is Acetaldehyde dehydrogenase (cbzQ) from Pseudomonas putida (Arthrobacter siderocapsulatus).